We begin with the raw amino-acid sequence, 493 residues long: High affinity nitrate transporter 2.7 (493 aa).

The segment covering 1–19 (MEPSQRNTKPPSFSDSTIP) has biased composition (polar residues). Residues 1–20 (MEPSQRNTKPPSFSDSTIPV) form a disordered region. The next 12 helical transmembrane spans lie at 46 to 66 (WLSL…VPVI), 70 to 90 (LNLS…GSIF), 113 to 133 (FLTA…SFIL), 136 to 156 (FFVG…SSMF), 174 to 194 (VGAG…AEFL), 202 to 222 (VSFV…LLYG), 257 to 277 (FVEI…ALLY), 299 to 319 (FGVN…SNIA), 341 to 361 (LWGL…LGRV), 368 to 388 (ILVM…VFGV), 400 to 420 (VAGI…FLLF), and 431 to 451 (ISLM…IYFP).

This sequence belongs to the major facilitator superfamily. Nitrate/nitrite porter (TC 2.A.1.8) family. Expressed in seeds, leaves and shoots. Lower expression in roots.

Its subcellular location is the vacuole membrane. Functionally, involved in high-affinity nitrate transport. Controls nitrate content in seeds. This Arabidopsis thaliana (Mouse-ear cress) protein is High affinity nitrate transporter 2.7 (NRT2.7).